We begin with the raw amino-acid sequence, 209 residues long: Ribosomal RNA large subunit methyltransferase E (209 aa).

5 residues coordinate S-adenosyl-L-methionine: glycine 63, tryptophan 65, aspartate 83, aspartate 99, and aspartate 124. Lysine 164 serves as the catalytic Proton acceptor.

This sequence belongs to the class I-like SAM-binding methyltransferase superfamily. RNA methyltransferase RlmE family.

It is found in the cytoplasm. The catalysed reaction is uridine(2552) in 23S rRNA + S-adenosyl-L-methionine = 2'-O-methyluridine(2552) in 23S rRNA + S-adenosyl-L-homocysteine + H(+). Functionally, specifically methylates the uridine in position 2552 of 23S rRNA at the 2'-O position of the ribose in the fully assembled 50S ribosomal subunit. The sequence is that of Ribosomal RNA large subunit methyltransferase E from Aliivibrio fischeri (strain MJ11) (Vibrio fischeri).